We begin with the raw amino-acid sequence, 379 residues long: uncharacterized protein (379 aa).

It belongs to the glycosyltransferase 28 family.

This is an uncharacterized protein from Methanosarcina mazei (strain ATCC BAA-159 / DSM 3647 / Goe1 / Go1 / JCM 11833 / OCM 88) (Methanosarcina frisia).